The primary structure comprises 449 residues: Putative glycosyltransferase 7 (449 aa).

Residues 1–32 (MVSPETSSSHYQSSPMAKYAGTRTRPVVCISD) are Cytoplasmic-facing. A helical; Signal-anchor for type II membrane protein transmembrane segment spans residues 33–53 (VVLFLGGAFMSLILVWSFFSF). Residues 54–449 (SSISPNLTVK…VPFDYPDEPW (396 aa)) lie on the Lumenal side of the membrane. Residues Asn-59, Asn-123, and Asn-332 are each glycosylated (N-linked (GlcNAc...) asparagine).

Belongs to the glycosyltransferase 34 family.

Its subcellular location is the golgi apparatus membrane. Probable glycosyltransferase that may be involved in the biosynthesis of xyloglucan. The protein is Putative glycosyltransferase 7 (GT7) of Arabidopsis thaliana (Mouse-ear cress).